We begin with the raw amino-acid sequence, 442 residues long: Adenylosuccinate synthetase (442 aa).

Residues 16-22 (GDEGKGK) and 44-46 (GHT) each bind GTP. D17 acts as the Proton acceptor in catalysis. Positions 17 and 44 each coordinate Mg(2+). IMP-binding positions include 17 to 20 (DEGK), 42 to 45 (NAGH), T133, R147, Q228, T243, and R307. Catalysis depends on H45, which acts as the Proton donor. 303 to 309 (AVTGRPR) is a binding site for substrate. GTP-binding positions include R309, 335-337 (KLD), and 417-419 (STG).

Belongs to the adenylosuccinate synthetase family. As to quaternary structure, homodimer. It depends on Mg(2+) as a cofactor.

Its subcellular location is the cytoplasm. The catalysed reaction is IMP + L-aspartate + GTP = N(6)-(1,2-dicarboxyethyl)-AMP + GDP + phosphate + 2 H(+). It functions in the pathway purine metabolism; AMP biosynthesis via de novo pathway; AMP from IMP: step 1/2. Plays an important role in the de novo pathway of purine nucleotide biosynthesis. Catalyzes the first committed step in the biosynthesis of AMP from IMP. The chain is Adenylosuccinate synthetase from Koribacter versatilis (strain Ellin345).